The following is a 905-amino-acid chain: Cation-transporting ATPase pma1 (905 aa).

4 helical membrane-spanning segments follow: residues Phe60–Ala80, Phe81–Ile101, Phe248–Trp268, and Ala283–Ile303. Residue Asp333 is the 4-aspartylphosphate intermediate of the active site. The next 5 helical transmembrane spans lie at Ile716–Leu736, Leu774–Glu794, Met809–Gly829, Ile848–Phe868, and Trp880–Ala900.

Belongs to the cation transport ATPase (P-type) (TC 3.A.3) family. Type IIA subfamily.

It is found in the cell membrane. The catalysed reaction is ATP + H2O = ADP + phosphate + H(+). Functionally, could mediate calcium influx. This is Cation-transporting ATPase pma1 (pma1) from Synechocystis sp. (strain ATCC 27184 / PCC 6803 / Kazusa).